The chain runs to 444 residues: 23S rRNA (uracil(1939)-C(5))-methyltransferase RlmD (444 aa).

The TRAM domain occupies 5–67 (RNRFDRTPFQ…RHFDEAKTVE (63 aa)). [4Fe-4S] cluster is bound by residues cysteine 80, cysteine 86, cysteine 89, and cysteine 168. Residues glutamine 276, phenylalanine 305, asparagine 310, glutamate 326, aspartate 353, and aspartate 374 each contribute to the S-adenosyl-L-methionine site. Catalysis depends on cysteine 400, which acts as the Nucleophile.

The protein belongs to the class I-like SAM-binding methyltransferase superfamily. RNA M5U methyltransferase family. RlmD subfamily.

The enzyme catalyses uridine(1939) in 23S rRNA + S-adenosyl-L-methionine = 5-methyluridine(1939) in 23S rRNA + S-adenosyl-L-homocysteine + H(+). In terms of biological role, catalyzes the formation of 5-methyl-uridine at position 1939 (m5U1939) in 23S rRNA. This Xanthomonas oryzae pv. oryzae (strain KACC10331 / KXO85) protein is 23S rRNA (uracil(1939)-C(5))-methyltransferase RlmD.